A 252-amino-acid polypeptide reads, in one-letter code: tRNA1(Val) (adenine(37)-N6)-methyltransferase (252 aa).

Belongs to the methyltransferase superfamily. tRNA (adenine-N(6)-)-methyltransferase family.

Its subcellular location is the cytoplasm. It carries out the reaction adenosine(37) in tRNA1(Val) + S-adenosyl-L-methionine = N(6)-methyladenosine(37) in tRNA1(Val) + S-adenosyl-L-homocysteine + H(+). Specifically methylates the adenine in position 37 of tRNA(1)(Val) (anticodon cmo5UAC). This Yersinia pseudotuberculosis serotype O:3 (strain YPIII) protein is tRNA1(Val) (adenine(37)-N6)-methyltransferase.